A 730-amino-acid chain; its full sequence is Multifunctional procollagen lysine hydroxylase and glycosyltransferase (730 aa).

Positions 1–16 are cleaved as a signal peptide; the sequence is MRVLPFLLPLIPVLLA. The required for glycosyltransferase activity stretch occupies residues 20–280; it reads TDLPELVVVT…CGLEVKESEE (261 aa). Residues 30–32 and 98–100 each bind UDP; these read VAT and DAY. Positions 98, 101, and 242 each coordinate Mn(2+). UDP is bound at residue 245-248; it reads GPSK. An intrachain disulfide couples Cys-268 to Cys-271. Residues 281 to 507 form an accessory region region; sequence VPLIALNLFI…YYGFLIVSDE (227 aa). Residues Cys-554 and Cys-690 are joined by a disulfide bond. Arg-590 and Tyr-648 together coordinate 2-oxoglutarate. Residues 639 to 730 form the Fe2OG dioxygenase domain; sequence ESNMMFVVRY…RYIMVSFINP (92 aa). Fe cation is bound by residues His-659 and Asp-661. Residues 664 to 707 form an important for dimerization region; the sequence is TFSIDIALNKKGRDYEGGGVRYIRYNCTVPADEVGYAMMFPGRL. N-linked (GlcNAc...) asparagine glycosylation is present at Asn-689. Residue His-711 coordinates Fe cation. A 2-oxoglutarate-binding site is contributed by Arg-721.

As to quaternary structure, homodimer. The cofactor is Fe(2+). It depends on L-ascorbate as a cofactor. Mn(2+) is required as a cofactor.

It is found in the rough endoplasmic reticulum. The protein resides in the endoplasmic reticulum lumen. It localises to the endoplasmic reticulum membrane. The protein localises to the secreted. Its subcellular location is the extracellular space. It catalyses the reaction L-lysyl-[collagen] + 2-oxoglutarate + O2 = (5R)-5-hydroxy-L-lysyl-[collagen] + succinate + CO2. The catalysed reaction is (5R)-5-hydroxy-L-lysyl-[collagen] + UDP-alpha-D-galactose = (5R)-5-O-(beta-D-galactosyl)-5-hydroxy-L-lysyl-[collagen] + UDP + H(+). The enzyme catalyses (5R)-5-O-(beta-D-galactosyl)-5-hydroxy-L-lysyl-[collagen] + UDP-alpha-D-glucose = (5R)-5-O-[alpha-D-glucosyl-(1-&gt;2)-beta-D-galactosyl]-5-hydroxy-L-lysyl-[collagen] + UDP + H(+). Functionally, multifunctional enzyme that catalyzes a series of post-translational modifications on Lys residues in procollagen. Catalyzes the formation of hydroxylysine residues in -Xaa-Lys-Gly- sequences in type IV collagens. Transfers galactose onto hydroxylysine groups, giving rise to galactosyl 5-hydroxylysine. Catalyzes the subsequent transfer of glucose moieties, giving rise to 1,2-glucosylgalactosyl-5-hydroxylysine residues. Essential for normal biosynthesis and secretion of type IV collagens. Essential for normal stability of the basement membrane. The protein is Multifunctional procollagen lysine hydroxylase and glycosyltransferase (let-268) of Caenorhabditis elegans.